Reading from the N-terminus, the 387-residue chain is Prostatic acid phosphatase (387 aa).

The first 34 residues, 1 to 34 (MRNAALLMTRATSLRLSLLLLLSFLPDLDGGVRA), serve as a signal peptide directing secretion. Residue Arg45 participates in substrate binding. Catalysis depends on His46, which acts as the Nucleophile. Arg49 lines the substrate pocket. Asn96 is a glycosylation site (N-linked (GlcNAc...) asparagine). Residue Arg113 participates in substrate binding. Disulfide bonds link Cys163-Cys374, Cys217-Cys315, and Cys349-Cys353. Asn222 carries N-linked (GlcNAc...) asparagine glycosylation. His291 provides a ligand contact to substrate. Catalysis depends on Asp292, which acts as the Proton donor. Asn335 carries N-linked (GlcNAc...) asparagine glycosylation.

The protein belongs to the histidine acid phosphatase family. In terms of assembly, homodimer; dimer formation is required for phosphatase activity.

The protein localises to the secreted. The catalysed reaction is a phosphate monoester + H2O = an alcohol + phosphate. It carries out the reaction 1-(9Z-octadecenoyl)-sn-glycero-3-phosphate + H2O = 1-(9Z-octadecenoyl)-sn-glycerol + phosphate. The enzyme catalyses O-phospho-L-tyrosyl-[protein] + H2O = L-tyrosyl-[protein] + phosphate. In terms of biological role, a non-specific tyrosine phosphatase that dephosphorylates a diverse number of substrates under acidic conditions (pH 4-6) including alkyl, aryl, and acyl orthophosphate monoesters and phosphorylated proteins. Has lipid phosphatase activity and inactivates lysophosphatidic acid in seminal plasma. The chain is Prostatic acid phosphatase (ACP3) from Bos taurus (Bovine).